A 344-amino-acid polypeptide reads, in one-letter code: MPESPPLPKRSPLMTSSTTRPASDYPPGGDAFRHRHLTGIAQLTPWEISYILDAAEEWVELNRSGAAKHDDRLAGLTIINAFFENSTRTLLSFEIAGKRLGADVVNMHAAQSSVKKGETLIDTAMTLNAMRADAIVIRHASSGAVQLIADKVDCPVLNAGDGRHEHPTQALLDALTIRRRLGRVEGLAIAICGDVLHSRVARSNILALTLLGNEVRVVAPATLTPPAMERMHVRCFTDMDEGLKGADVVMMLRLQNERMDGAHLPSAREYHALYGLTPQRLEKAKPDAIVMHPGPMNRGVEIDSSVADDHARSTITEQVEMGVAVRMACLDILTRRQRGVPGWN.

Positions 1–30 (MPESPPLPKRSPLMTSSTTRPASDYPPGGD) are disordered. Carbamoyl phosphate contacts are provided by arginine 88 and threonine 89. An L-aspartate-binding site is contributed by lysine 116. Carbamoyl phosphate contacts are provided by arginine 138, histidine 166, and glutamine 169. Positions 199 and 253 each coordinate L-aspartate. Positions 294 and 295 each coordinate carbamoyl phosphate.

It belongs to the aspartate/ornithine carbamoyltransferase superfamily. ATCase family. Heterododecamer (2C3:3R2) of six catalytic PyrB chains organized as two trimers (C3), and six regulatory PyrI chains organized as three dimers (R2).

It catalyses the reaction carbamoyl phosphate + L-aspartate = N-carbamoyl-L-aspartate + phosphate + H(+). Its pathway is pyrimidine metabolism; UMP biosynthesis via de novo pathway; (S)-dihydroorotate from bicarbonate: step 2/3. Its function is as follows. Catalyzes the condensation of carbamoyl phosphate and aspartate to form carbamoyl aspartate and inorganic phosphate, the committed step in the de novo pyrimidine nucleotide biosynthesis pathway. The chain is Aspartate carbamoyltransferase catalytic subunit from Sphingopyxis alaskensis (strain DSM 13593 / LMG 18877 / RB2256) (Sphingomonas alaskensis).